We begin with the raw amino-acid sequence, 277 residues long: Cis-3,4-dihydrophenanthrene-3,4-diol dehydrogenase (277 aa).

NAD(+) is bound by residues Phe-10 to Asp-37 and Asp-60. Ser-143 is a binding site for substrate. The Proton acceptor role is filled by Tyr-156. Lys-160 lines the NAD(+) pocket.

This sequence belongs to the short-chain dehydrogenases/reductases (SDR) family. As to quaternary structure, homotetramer.

It catalyses the reaction (3S,4R)-3,4-dihydrophenanthrene-3,4-diol + NAD(+) = phenanthrene-3,4-diol + NADH + H(+). Its activity is regulated as follows. Inhibited by heavy metal such as Hg(2+) and by p-chloromercuribenzoate. In terms of biological role, involved in the degradation of phenanthrene. Catalyzes the oxidation of cis-phenanthrene dihydrodiol (PDD) to yield phenanthrenediol. It can use either NAD or NADP as electron acceptor, however NAD is preferred to NADP. The chain is Cis-3,4-dihydrophenanthrene-3,4-diol dehydrogenase (phnB) from Alcaligenes faecalis.